The sequence spans 548 residues: Tau-cadinol synthase (548 aa).

Residues aspartate 303 and aspartate 307 each coordinate Mg(2+). Substrate-binding residues include aspartate 303, aspartate 307, and arginine 443. The DDXXD motif motif lies at 303–307 (DDTYD).

It belongs to the terpene synthase family. In terms of assembly, monomer. Requires Mg(2+) as cofactor. Mn(2+) is required as a cofactor. Constitutively expressed in aerial tissues, but barely observed in roots.

It localises to the cytoplasm. It catalyses the reaction (2E,6E)-farnesyl diphosphate + H2O = tau-cadinol + diphosphate. The protein operates within secondary metabolite biosynthesis; terpenoid biosynthesis. Its function is as follows. Sesquiterpene synthase that catalyzes the formation of a blend of sesquiterpenes and sesquiterpenoid alcohols. Converts farnesyl diphosphate to tau-cadinol. The sequence is that of Tau-cadinol synthase from Zea mays (Maize).